Reading from the N-terminus, the 278-residue chain is Undecaprenyl-diphosphatase (278 aa).

8 helical membrane passes run 3 to 23, 42 to 62, 88 to 108, 112 to 132, 152 to 172, 190 to 210, 225 to 245, and 253 to 273; these read YILIGVILGIVQGISEWIPIS, VAYSFGLFMEIGTIAAAIFYF, FLVIVTIITGLVGVPLYLFVI, ILGLPMTVLGVVLLIDGIVIY, IIIVGIAQGLAALPGVSRSGM, LSFISLIPAALGAISVTVLFS, GLLISIVVATFVSIFFINALL, and VVLLVIILGIMAIISGILSDI.

The protein belongs to the UppP family.

Its subcellular location is the cell membrane. The catalysed reaction is di-trans,octa-cis-undecaprenyl diphosphate + H2O = di-trans,octa-cis-undecaprenyl phosphate + phosphate + H(+). Catalyzes the dephosphorylation of undecaprenyl diphosphate (UPP). The polypeptide is Undecaprenyl-diphosphatase (Saccharolobus solfataricus (strain ATCC 35092 / DSM 1617 / JCM 11322 / P2) (Sulfolobus solfataricus)).